The sequence spans 87 residues: Small ribosomal subunit protein bS20 (87 aa).

Belongs to the bacterial ribosomal protein bS20 family.

Binds directly to 16S ribosomal RNA. The polypeptide is Small ribosomal subunit protein bS20 (Neorickettsia sennetsu (strain ATCC VR-367 / Miyayama) (Ehrlichia sennetsu)).